Reading from the N-terminus, the 307-residue chain is Small ribosomal subunit biogenesis GTPase RsgA (307 aa).

The interval 1-21 is disordered; sequence MPSEHPFSDGISTPNPKETMN. Residues 10–21 are compositionally biased toward polar residues; the sequence is GISTPNPKETMN. One can recognise a CP-type G domain in the interval 85 to 242; the sequence is RQDAWKTKLI…LIDSPGLQEF (158 aa). Residues 135 to 138 and 184 to 192 each bind GTP; these read NKAD and GQSGMGKST. Zn(2+)-binding residues include C266, C271, H273, and C279.

Belongs to the TRAFAC class YlqF/YawG GTPase family. RsgA subfamily. Monomer. Associates with 30S ribosomal subunit, binds 16S rRNA. It depends on Zn(2+) as a cofactor.

The protein localises to the cytoplasm. One of several proteins that assist in the late maturation steps of the functional core of the 30S ribosomal subunit. Helps release RbfA from mature subunits. May play a role in the assembly of ribosomal proteins into the subunit. Circularly permuted GTPase that catalyzes slow GTP hydrolysis, GTPase activity is stimulated by the 30S ribosomal subunit. The polypeptide is Small ribosomal subunit biogenesis GTPase RsgA (Neisseria gonorrhoeae (strain NCCP11945)).